We begin with the raw amino-acid sequence, 153 residues long: Ribosome maturation factor RimP (153 aa).

The protein belongs to the RimP family.

The protein localises to the cytoplasm. Required for maturation of 30S ribosomal subunits. The sequence is that of Ribosome maturation factor RimP from Coxiella burnetii (strain CbuK_Q154) (Coxiella burnetii (strain Q154)).